Reading from the N-terminus, the 541-residue chain is Eukaryotic translation initiation factor 3 subunit D-1 (541 aa).

The segment at 98-136 is disordered; it reads VQKPPHQRGRFRNMRGRGGRGRNPRGGLNNHHHHGMTTL. Residues 100–120 show a composition bias toward basic residues; that stretch reads KPPHQRGRFRNMRGRGGRGRN.

Belongs to the eIF-3 subunit D family. Component of the eukaryotic translation initiation factor 3 (eIF-3) complex. The eIF-3 complex interacts with pix.

The protein resides in the cytoplasm. MRNA cap-binding component of the eukaryotic translation initiation factor 3 (eIF-3) complex, which is involved in protein synthesis of a specialized repertoire of mRNAs and, together with other initiation factors, stimulates binding of mRNA and methionyl-tRNAi to the 40S ribosome. The eIF-3 complex specifically targets and initiates translation of a subset of mRNAs involved in cell proliferation. In the eIF-3 complex, eif3d specifically recognizes and binds the 7-methylguanosine cap of a subset of mRNAs. The protein is Eukaryotic translation initiation factor 3 subunit D-1 of Drosophila persimilis (Fruit fly).